The chain runs to 475 residues: BICD family-like cargo adapter 2 (475 aa).

Positions 56 to 275 (ELGKALLERN…LKELQDELHM (220 aa)) form a coiled coil. Composition is skewed to polar residues over residues 286-300 (HSSL…TAVQ) and 308-318 (SAETQSITSGY). Residues 286–318 (HSSLHSEIQQSTAVQNHEKGRNSAETQSITSGY) are disordered. Residues 340-413 (RLQDQVTMQH…ESLNLQLLST (74 aa)) are a coiled coil. Low complexity predominate over residues 440 to 450 (QSQKQQETQKP). Residues 440 to 459 (QSQKQQETQKPPESPQNSFL) form a disordered region.

This sequence belongs to the BICDR family.

The chain is BICD family-like cargo adapter 2 (bicdl2) from Xenopus tropicalis (Western clawed frog).